A 572-amino-acid polypeptide reads, in one-letter code: Hemagglutinin-neuraminidase (572 aa).

At 1–31 (MEYWKHTNHGKDAGNELETSMATHGNKLTNK) the chain is on the intravirion side. A helical membrane pass occupies residues 32–52 (ITYILWTIILVLLSIVFIIVL). Residues 53–572 (INSIKSEKAH…FKTEIPKSCS (520 aa)) lie on the Virion surface side of the membrane. Disulfide bonds link cysteine 190-cysteine 214 and cysteine 256-cysteine 269. Residues 252–257 (NRKSCS) are involved in neuraminidase activity. N-linked (GlcNAc...) asparagine; by host glycans are attached at residues asparagine 308 and asparagine 351. Disulfide bonds link cysteine 355-cysteine 469 and cysteine 463-cysteine 473. A glycan (N-linked (GlcNAc...) asparagine; by host) is linked at asparagine 523. A disulfide bridge connects residues cysteine 535 and cysteine 544.

It belongs to the paramyxoviruses hemagglutinin-neuraminidase family. In terms of assembly, homotetramer; composed of disulfide-linked homodimers. Interacts with F protein trimer.

Its subcellular location is the virion membrane. It localises to the host cell membrane. The catalysed reaction is Hydrolysis of alpha-(2-&gt;3)-, alpha-(2-&gt;6)-, alpha-(2-&gt;8)- glycosidic linkages of terminal sialic acid residues in oligosaccharides, glycoproteins, glycolipids, colominic acid and synthetic substrates.. In terms of biological role, attaches the virus to sialic acid-containing cell receptors and thereby initiating infection. Binding of HN protein to the receptor induces a conformational change that allows the F protein to trigger virion/cell membranes fusion. Functionally, neuraminidase activity ensures the efficient spread of the virus by dissociating the mature virions from the neuraminic acid containing glycoproteins. This chain is Hemagglutinin-neuraminidase (HN), found in Homo sapiens (Human).